The sequence spans 607 residues: MSKVIGIDLGTTNSCVAVLEGGEPKVIANPEGNRTTPSVVAFKNGETQVGEVAKRQAITNPNTIISIKRHMGTDYKENIEGKEYSPQEISAMILQNLKATAESYLGEKVTKAVITVPAYFNDAERQATKDAGKIAGLEVERIINEPTAAALAYGLDKTDKEQKVLVFDLGGGTFDVSILELGDGVFEVLSTSGDNKLGGDDFDQVIIDYLVEEFKKENGLDLSQDKMAMQRLKDAAEKAKKDLSGVSSTQISLPFISAGEAGPLHLEVTLSRAKFEELSHTLVERTMGPTRQAMKDAGLSNADIDEVILVGGSTRIPAVQEAIKKELGKEPNKGVNPDEVVAMGAAIQGGVITGDVKDVVLLDVTPLSLGIETMGGVSTVLIERNTTIPTSKSQVFSTAADNQPAVDIHVLQGERQMAADNKTLGRFQLTDIPPAPRGVPQIEVTFDIDKNGIVNVTAKDLGTQKEQKITIQSSSSLSDEEIDRMVKDAEANAEADKKRREEVDLRNEADQLVFATDKAIKDLEDKVDAAEKEKAEAAKEELKKALEGNDLEEIKAKKDTLNEIVQGLSMKLYEQMAQAQQGAEGAASQDDDVVDADFTEVKDDDNK.

Phosphothreonine; by autocatalysis is present on Thr173. Over residues 577–588 (AQAQQGAEGAAS) the composition is skewed to low complexity. The segment at 577-607 (AQAQQGAEGAASQDDDVVDADFTEVKDDDNK) is disordered. Over residues 589-598 (QDDDVVDADF) the composition is skewed to acidic residues.

The protein belongs to the heat shock protein 70 family.

In terms of biological role, acts as a chaperone. The protein is Chaperone protein DnaK of Macrococcus caseolyticus (strain JCSC5402) (Macrococcoides caseolyticum).